We begin with the raw amino-acid sequence, 446 residues long: MEAEAADAPPGRVEAALSCFSFNQDCTSLAIGTKAGYKLFSLSSVEQLDQVHGSNEIPDVYIVERLFSSSLVVVVSHTKPRQMNVYHFKKGTEICNYSYSSNILSIRLNRQRLLVCLEESIYIHNIKDMKLLKTVLDIPSNPTGLCALSINHSNSYLAYPGSQSTGEIVLYDGNSLKTVCTIAAHEGTLAAITFNSSGSKLASASEKGTVIRVFSVPEGQKLYEFRRGMKRYVTISSLVFSMDSQFLCASSNTETVHIFKMEHLTDSRPEEPSTWSGYMGKMFMAATNYLPAQVSDMMNQDRAFATGRLNFSGQKNICTLSTIQKLPRLLVASSDGHLYIYNLDPQDGGECVLIKTHSLLSSGTTEENKENDLRPSLPPSYAATVARPSTSAASTVPGYSEDGGALRGEVIPEHEFATGPVCLDDENEFPPIILCRGSQKGKTKQS.

The Nuclear receptor interaction signature appears at 131 to 136 (LLKTVL). One copy of the WD 1 repeat lies at 184 to 224 (AHEGTLAAITFNSSGSKLASASEKGTVIRVFSVPEGQKLYE). Residues 225–228 (FRRG) carry the L/FRRG motif motif. WD repeat units follow at residues 230 to 269 (KRYVTISSLVFSMDSQFLCASSNTETVHIFKMEHLTDSRP) and 312 to 351 (SGQKNICTLSTIQKLPRLLVASSDGHLYIYNLDPQDGGEC). The segment at 386–406 (ARPSTSAASTVPGYSEDGGAL) is disordered.

It belongs to the WD repeat PROPPIN family. As to quaternary structure, interacts with androgen receptor (AR) and the estrogen receptors ESR1 and ESR2. Interacts with WIPI2. Interacts with WDR45. Interacts with ATG16L1. May interact with NUDC.

It localises to the golgi apparatus. It is found in the trans-Golgi network. The protein localises to the endosome. Its subcellular location is the cytoplasmic vesicle. The protein resides in the clathrin-coated vesicle. It localises to the preautophagosomal structure membrane. It is found in the cytoplasm. The protein localises to the cytoskeleton. Its function is as follows. Component of the autophagy machinery that controls the major intracellular degradation process by which cytoplasmic materials are packaged into autophagosomes and delivered to lysosomes for degradation. Plays an important role in starvation- and calcium-mediated autophagy, as well as in mitophagy. Functions downstream of the ULK1 and PI3-kinases that produce phosphatidylinositol 3-phosphate (PtdIns3P) on membranes of the endoplasmic reticulum once activated. Binds phosphatidylinositol 3-phosphate (PtdIns3P), and maybe other phosphoinositides including PtdIns3,5P2 and PtdIns5P, and is recruited to phagophore assembly sites at the endoplasmic reticulum membranes. There, it assists WIPI2 in the recruitment of ATG12-ATG5-ATG16L1, a complex that directly controls the elongation of the nascent autophagosomal membrane. Together with WDR45/WIPI4, promotes ATG2 (ATG2A or ATG2B)-mediated lipid transfer by enhancing ATG2-association with phosphatidylinositol 3-monophosphate (PI3P)-containing membranes. Involved in xenophagy of Staphylococcus aureus. Invading S.aureus cells become entrapped in autophagosome-like WIPI1 positive vesicles targeted for lysosomal degradation. Also plays a distinct role in controlling the transcription of melanogenic enzymes and melanosome maturation, a process that is distinct from starvation-induced autophagy. May also regulate the trafficking of proteins involved in the mannose-6-phosphate receptor (MPR) recycling pathway. This is WD repeat domain phosphoinositide-interacting protein 1 (Wipi1) from Mus musculus (Mouse).